The following is a 31-amino-acid chain: Cytochrome b6-f complex subunit 6 (31 aa).

Residues 4 to 26 (LTSYFGFLLAALTITSALFIGLN) form a helical membrane-spanning segment.

This sequence belongs to the PetL family. In terms of assembly, the 4 large subunits of the cytochrome b6-f complex are cytochrome b6, subunit IV (17 kDa polypeptide, PetD), cytochrome f and the Rieske protein, while the 4 small subunits are PetG, PetL, PetM and PetN. The complex functions as a dimer.

The protein localises to the plastid. The protein resides in the chloroplast thylakoid membrane. In terms of biological role, component of the cytochrome b6-f complex, which mediates electron transfer between photosystem II (PSII) and photosystem I (PSI), cyclic electron flow around PSI, and state transitions. PetL is important for photoautotrophic growth as well as for electron transfer efficiency and stability of the cytochrome b6-f complex. This Blitum bonus-henricus (Good King Henry) protein is Cytochrome b6-f complex subunit 6.